We begin with the raw amino-acid sequence, 106 residues long: Phosphoribosyl-ATP pyrophosphatase (106 aa).

The protein belongs to the PRA-PH family.

The protein resides in the cytoplasm. It catalyses the reaction 1-(5-phospho-beta-D-ribosyl)-ATP + H2O = 1-(5-phospho-beta-D-ribosyl)-5'-AMP + diphosphate + H(+). It functions in the pathway amino-acid biosynthesis; L-histidine biosynthesis; L-histidine from 5-phospho-alpha-D-ribose 1-diphosphate: step 2/9. This is Phosphoribosyl-ATP pyrophosphatase from Rhizorhabdus wittichii (strain DSM 6014 / CCUG 31198 / JCM 15750 / NBRC 105917 / EY 4224 / RW1) (Sphingomonas wittichii).